A 108-amino-acid chain; its full sequence is Small ribosomal subunit protein bS18c (108 aa).

Composition is skewed to basic residues over residues 1–19 (MDKS…RRRL) and 97–108 (RARKKKIGLLLN). Disordered stretches follow at residues 1–23 (MDKS…PPIG) and 83–108 (QFER…LLLN).

Belongs to the bacterial ribosomal protein bS18 family. As to quaternary structure, part of the 30S ribosomal subunit.

Its subcellular location is the plastid. It is found in the chloroplast. The sequence is that of Small ribosomal subunit protein bS18c from Illicium oligandrum (Star anise).